Consider the following 297-residue polypeptide: Protoheme IX farnesyltransferase (297 aa).

A run of 9 helical transmembrane segments spans residues 23-43 (VTQL…PGMP), 49-69 (VFGT…NCLI), 93-113 (IQVL…LYHL), 117-137 (LTMW…TVIL), 144-164 (NIVI…AAVA), 171-191 (AWVL…ALAL), 215-235 (RLHI…PYAI), 238-258 (SGAL…WYAW), and 275-295 (FSIL…WVGL).

Belongs to the UbiA prenyltransferase family. Protoheme IX farnesyltransferase subfamily.

The protein localises to the cell inner membrane. It catalyses the reaction heme b + (2E,6E)-farnesyl diphosphate + H2O = Fe(II)-heme o + diphosphate. The protein operates within porphyrin-containing compound metabolism; heme O biosynthesis; heme O from protoheme: step 1/1. Converts heme B (protoheme IX) to heme O by substitution of the vinyl group on carbon 2 of heme B porphyrin ring with a hydroxyethyl farnesyl side group. The protein is Protoheme IX farnesyltransferase of Bordetella pertussis (strain Tohama I / ATCC BAA-589 / NCTC 13251).